Here is a 345-residue protein sequence, read N- to C-terminus: Ryncolin-4 (345 aa).

Positions 1–19 are cleaved as a signal peptide; that stretch reads MKPWAAFHLIFLVASSLEG. Residues 48–118 form a disordered region; it reads ILQSQPGIPG…DKGDKGEDCN (71 aa). Residues 57-114 form the Collagen-like domain; sequence GIPGVPGTNGSEGLKGDPGPQGPPGIRGPDGIRGEAGPKGDKGDQGDKGDKGDKGDKG. The segment covering 86-116 has biased composition (basic and acidic residues); sequence DGIRGEAGPKGDKGDQGDKGDKGDKGDKGED. Residues 121–339 form the Fibrinogen C-terminal domain; the sequence is DCLPTEVRNC…YADMKIRPQK (219 aa). 2 disulfide bridges follow: Cys130–Cys158 and Cys282–Cys295.

This sequence belongs to the ficolin lectin family. Veficolin subfamily. In terms of processing, hydroxylated, possibly at Pro-80. As to expression, expressed by the venom duct.

The protein localises to the secreted. Its function is as follows. Initiates complement activation and/or interferes in platelet aggregation and/or blood coagulation. The protein is Ryncolin-4 of Cerberus rynchops (Dog-faced water snake).